The chain runs to 182 residues: Adenine phosphoribosyltransferase (182 aa).

Belongs to the purine/pyrimidine phosphoribosyltransferase family. As to quaternary structure, homodimer.

It is found in the cytoplasm. The catalysed reaction is AMP + diphosphate = 5-phospho-alpha-D-ribose 1-diphosphate + adenine. It functions in the pathway purine metabolism; AMP biosynthesis via salvage pathway; AMP from adenine: step 1/1. In terms of biological role, catalyzes a salvage reaction resulting in the formation of AMP, that is energically less costly than de novo synthesis. This chain is Adenine phosphoribosyltransferase, found in Pseudomonas fluorescens (strain Pf0-1).